The sequence spans 786 residues: Endonuclease MutS2 (786 aa).

333–340 (GPNTGGKT) contacts ATP. The interval 682–709 (EKIKPSKQSAAQRPVVKVSGGGMSGPST) is disordered. The Smr domain maps to 711 to 786 (LDLRGERYDQ…GSGATIVNFK (76 aa)).

It belongs to the DNA mismatch repair MutS family. MutS2 subfamily. Homodimer. Binds to stalled ribosomes, contacting rRNA.

Its function is as follows. Endonuclease that is involved in the suppression of homologous recombination and thus may have a key role in the control of bacterial genetic diversity. Functionally, acts as a ribosome collision sensor, splitting the ribosome into its 2 subunits. Detects stalled/collided 70S ribosomes which it binds and splits by an ATP-hydrolysis driven conformational change. Acts upstream of the ribosome quality control system (RQC), a ribosome-associated complex that mediates the extraction of incompletely synthesized nascent chains from stalled ribosomes and their subsequent degradation. Probably generates substrates for RQC. This Lacticaseibacillus casei (strain BL23) (Lactobacillus casei) protein is Endonuclease MutS2.